Consider the following 390-residue polypeptide: Mannitol-1-phosphate 5-dehydrogenase (390 aa).

NAD(+) is bound at residue 7–18; it reads AVHFGGGNIGRG. Lys216 is an active-site residue.

This sequence belongs to the mannitol dehydrogenase family. In terms of assembly, monomer.

The enzyme catalyses D-mannitol 1-phosphate + NAD(+) = beta-D-fructose 6-phosphate + NADH + H(+). In terms of biological role, catalyzes the NAD(H)-dependent interconversion of D-fructose 6-phosphate and D-mannitol 1-phosphate in the mannitol metabolic pathway. Has a strong preference for NADH over NADPH. The protein is Mannitol-1-phosphate 5-dehydrogenase of Alternaria alternata (Alternaria rot fungus).